Here is a 466-residue protein sequence, read N- to C-terminus: Argininosuccinate lyase (466 aa).

The 2-(N(omega)-L-arginino)succinate site is built by serine 27, asparagine 114, and threonine 159. The active-site Proton acceptor is the histidine 160. Catalysis depends on serine 281, which acts as the Proton donor. The 2-(N(omega)-L-arginino)succinate site is built by asparagine 289, tyrosine 321, glutamine 326, and lysine 329.

The protein belongs to the lyase 1 family. Argininosuccinate lyase subfamily. As to quaternary structure, homotetramer. In terms of tissue distribution, eye lens.

It catalyses the reaction 2-(N(omega)-L-arginino)succinate = fumarate + L-arginine. The protein operates within amino-acid biosynthesis; L-arginine biosynthesis; L-arginine from L-ornithine and carbamoyl phosphate: step 3/3. Functionally, delta crystallin, the principal crystallin in embryonic lens, is found only in birds and reptiles. This protein also functions as an enzymatically active argininosuccinate lyase. The chain is Argininosuccinate lyase (ASL) from Anser anser anser (Western greylag goose).